The following is a 454-amino-acid chain: Glutamyl-tRNA reductase (454 aa).

Residues 49 to 52 (TCNR), Ser-109, 114 to 116 (ETQ), and Gln-120 each bind substrate. The Nucleophile role is filled by Cys-50. NADP(+) is bound at residue 189-194 (GAGKMS). The tract at residues 434–454 (NDKNKQTSSSREQVLVSRFPD) is disordered.

This sequence belongs to the glutamyl-tRNA reductase family. In terms of assembly, homodimer.

It catalyses the reaction (S)-4-amino-5-oxopentanoate + tRNA(Glu) + NADP(+) = L-glutamyl-tRNA(Glu) + NADPH + H(+). It participates in porphyrin-containing compound metabolism; protoporphyrin-IX biosynthesis; 5-aminolevulinate from L-glutamyl-tRNA(Glu): step 1/2. Catalyzes the NADPH-dependent reduction of glutamyl-tRNA(Glu) to glutamate 1-semialdehyde (GSA). This is Glutamyl-tRNA reductase from Brevibacillus brevis (strain 47 / JCM 6285 / NBRC 100599).